A 540-amino-acid polypeptide reads, in one-letter code: Terminase large subunit (540 aa).

The Mn(2+) site is built by aspartate 352, aspartate 424, and aspartate 523.

Belongs to the skunavirus terminase large subunit family. As to quaternary structure, interacts with the terminase small subunit; the active complex is probably heterooligomeric. The cofactor is Mn(2+). It depends on Mg(2+) as a cofactor.

In terms of biological role, probable terminase large subunit. The terminase large subunit acts as an ATP driven molecular motor necessary for viral DNA translocation into empty capsids and as an endonuclease that cuts the viral genome to initiate and to end a packaging reaction. The terminase lies at a unique vertex of the procapsid and is composed of two subunits, a small terminase subunit involved in viral DNA recognition (packaging sequence), and a large terminase subunit possessing endonucleolytic and ATPase activities. Both terminase subunits heterooligomerize and are docked on the portal protein to form the packaging machine. The terminase large subunit exhibits endonuclease activity and cleaves the viral genome concatemer. In Lactococcus lactis (Lactococcus lactis bacteriophage p2), this protein is Terminase large subunit.